The following is a 1102-amino-acid chain: Phosphatidylinositol 4,5-bisphosphate 3-kinase catalytic subunit gamma isoform (1102 aa).

Residues 34–141 (SMELIPIEFV…PGQIHVVQRH (108 aa)) enclose the PI3K-ABD domain. Residues 217–309 (NNCVFIVIHR…GEEIHLVLDT (93 aa)) form the PI3K-RBD domain. One can recognise a C2 PI3K-type domain in the interval 357 to 521 (CDRKFRVKIR…NSMSISILLD (165 aa)). A PIK helical domain is found at 541-723 (DRVRAEMPNQ…AVILEAYLRG (183 aa)). Residues 797-1080 (VIEKCKVMAS…QIEVCRDKGW (284 aa)) enclose the PI3K/PI4K catalytic domain. The tract at residues 803–809 (VMASKKK) is G-loop. Residues 829 to 838 (GIIFKHGDDL) and 864 to 872 (LLPYGCIST) contribute to the ATP site. Residues 943–951 (GIGDRHNDN) form a catalytic loop region. 961 to 969 (FHIDFGHIL) contacts ATP. The interval 962-988 (HIDFGHILGNYKSFLGINKERVPFVLT) is activation loop. At Thr-1024 the chain carries Phosphothreonine; by PKA. Phosphoserine; by autocatalysis is present on Ser-1101.

This sequence belongs to the PI3/PI4-kinase family. Heterodimer of a catalytic subunit PIK3CG and a PIK3R5 or PIK3R6 regulatory subunit. Interacts with GRK2 through the PIK helical domain. Interaction with GRK2 is required for targeting to agonist-occupied receptor. Interacts with PDE3B; regulates PDE3B activity and thereby cAMP levels in cells. Interacts with TPM2. Interacts with EPHA8; regulates integrin-mediated cell adhesion to substrate. Interacts with HRAS; the interaction is required for membrane recruitment and beta-gamma G protein dimer-dependent activation of the PI3K gamma complex PIK3CG:PIK3R6. Autophosphorylation at Ser-1101 has no effect on the phosphatidylinositol-4,5-bisphosphate 3-kinase activity.

Its subcellular location is the cytoplasm. It is found in the cell membrane. It catalyses the reaction a 1,2-diacyl-sn-glycero-3-phospho-(1D-myo-inositol-4,5-bisphosphate) + ATP = a 1,2-diacyl-sn-glycero-3-phospho-(1D-myo-inositol-3,4,5-trisphosphate) + ADP + H(+). The enzyme catalyses a 1,2-diacyl-sn-glycero-3-phospho-(1D-myo-inositol) + ATP = a 1,2-diacyl-sn-glycero-3-phospho-(1D-myo-inositol-3-phosphate) + ADP + H(+). It carries out the reaction a 1,2-diacyl-sn-glycero-3-phospho-(1D-myo-inositol 4-phosphate) + ATP = a 1,2-diacyl-sn-glycero-3-phospho-(1D-myo-inositol-3,4-bisphosphate) + ADP + H(+). The catalysed reaction is L-seryl-[protein] + ATP = O-phospho-L-seryl-[protein] + ADP + H(+). The protein operates within phospholipid metabolism; phosphatidylinositol phosphate biosynthesis. Activated by both the alpha and the beta-gamma G proteins following stimulation of G protein-coupled receptors (GPCRs). Activation by GPCRs is assisted by the regulatory subunits (PIK3R5 or PIK3R6) leading to the translocation from the cytosol to the plasma membrane and to kinase activation. When bound to PIK3R5 the PI3K activity of PIK3CG could be activated greater than 100-fold by the beta-gamma G proteins. Phosphoinositide-3-kinase (PI3K) that phosphorylates PtdIns(4,5)P2 (Phosphatidylinositol 4,5-bisphosphate) to generate phosphatidylinositol 3,4,5-trisphosphate (PIP3). PIP3 plays a key role by recruiting PH domain-containing proteins to the membrane, including AKT1 and PDPK1, activating signaling cascades involved in cell growth, survival, proliferation, motility and morphology. Links G-protein coupled receptor activation to PIP3 production. Involved in immune, inflammatory and allergic responses. Modulates leukocyte chemotaxis to inflammatory sites and in response to chemoattractant agents. May control leukocyte polarization and migration by regulating the spatial accumulation of PIP3 and by regulating the organization of F-actin formation and integrin-based adhesion at the leading edge. Controls motility of dendritic cells. Participates in T-lymphocyte migration. Regulates T-lymphocyte proliferation and cytokine production. Required for B-lymphocyte development and signaling. Together with other PI3Ks are involved in the oxidative burst produced by neutrophils in response to chemotactic agents. Together with PIK3CD regulate neutrophil extravasation. Together with PIK3CB promotes platelet aggregation and thrombosis. Regulates alpha-IIb/beta-3 integrins (ITGA2B/ ITGB3) adhesive function in platelets downstream of P2Y12 through a lipid kinase activity-independent mechanism. May have also a lipid kinase activity-dependent function in platelet aggregation. Involved in endothelial progenitor cell migration. Negative regulator of cardiac contractility. Modulates cardiac contractility by anchoring protein kinase A (PKA) and PDE3B activation, reducing cAMP levels. Regulates cardiac contractility also by promoting beta-adrenergic receptor internalization by binding to GRK2 and by non-muscle tropomyosin phosphorylation. Also has serine/threonine protein kinase activity: both lipid and protein kinase activities are required for beta-adrenergic receptor endocytosis. May also have a scaffolding role in modulating cardiac contractility. Contribute to cardiac hypertrophy under pathological stress. Through simultaneous binding of PDE3B to RAPGEF3 and PIK3R6 is assembled in a signaling complex in which the PI3K gamma complex is activated by RAPGEF3 and which is involved in angiogenesis. In neutrophils, participates in a phospholipase C-activating N-formyl peptide-activated GPCR (G protein-coupled receptor) signaling pathway downstream of RASGRP4-mediated Ras-activation, to promote neutrophil functional responses. The polypeptide is Phosphatidylinositol 4,5-bisphosphate 3-kinase catalytic subunit gamma isoform (PIK3CG) (Sus scrofa (Pig)).